The sequence spans 301 residues: uncharacterized protein (301 aa).

Belongs to the asfivirus E301R family. In terms of assembly, interacts with host IRF3.

Functionally, plays a role in the inhibition of host innate immune system by acting as a negatively regulator of type I interferon production. Mechanistically, interacts with and prevents host IRF3 nuclear localization to inhibit its transcriptional activity. This is an uncharacterized protein from African swine fever virus (isolate Tick/South Africa/Pretoriuskop Pr4/1996) (ASFV).